Consider the following 359-residue polypeptide: Phosphoribosylformylglycinamidine cyclo-ligase (359 aa).

The protein belongs to the AIR synthase family.

It is found in the cytoplasm. The catalysed reaction is 2-formamido-N(1)-(5-O-phospho-beta-D-ribosyl)acetamidine + ATP = 5-amino-1-(5-phospho-beta-D-ribosyl)imidazole + ADP + phosphate + H(+). It functions in the pathway purine metabolism; IMP biosynthesis via de novo pathway; 5-amino-1-(5-phospho-D-ribosyl)imidazole from N(2)-formyl-N(1)-(5-phospho-D-ribosyl)glycinamide: step 2/2. The sequence is that of Phosphoribosylformylglycinamidine cyclo-ligase from Brucella canis (strain ATCC 23365 / NCTC 10854 / RM-666).